Consider the following 131-residue polypeptide: Ribonuclease P protein component (131 aa).

It belongs to the RnpA family. In terms of assembly, consists of a catalytic RNA component (M1 or rnpB) and a protein subunit.

The enzyme catalyses Endonucleolytic cleavage of RNA, removing 5'-extranucleotides from tRNA precursor.. Its function is as follows. RNaseP catalyzes the removal of the 5'-leader sequence from pre-tRNA to produce the mature 5'-terminus. It can also cleave other RNA substrates such as 4.5S RNA. The protein component plays an auxiliary but essential role in vivo by binding to the 5'-leader sequence and broadening the substrate specificity of the ribozyme. This Acinetobacter baylyi (strain ATCC 33305 / BD413 / ADP1) protein is Ribonuclease P protein component.